The primary structure comprises 195 residues: Cysteine/O-acetylserine efflux protein (195 aa).

The Periplasmic portion of the chain corresponds to 1–7 (MTPTLLS). A helical membrane pass occupies residues 8-28 (AFWTYTLITAMTPGPNNILAL). At 29–46 (SSATSHGFRQSTRVLAGM) the chain is on the cytoplasmic side. A helical transmembrane segment spans residues 47–67 (SLGFLIVMLLCAGISFSLAVI). The Periplasmic segment spans residues 68–69 (DP). Residues 70–90 (AAVHLLSWAGAAYIVWLAWKI) traverse the membrane as a helical segment. Over 91–104 (ATSPTKEDGLQAKP) the chain is Cytoplasmic. The chain crosses the membrane as a helical span at residues 105–125 (ISFWASFALQFVNVKIILYGV). Over 126 to 141 (TALSTFVLPQTQALSW) the chain is Periplasmic. The helical transmembrane segment at 142-162 (VVGVSVLLAMIGTFGNVCWAL) threads the bilayer. The Cytoplasmic segment spans residues 163–176 (AGHLFQRLFRQYGR). Residues 177 to 194 (QLNIVLALLLIYCAVRIF) form a helical membrane-spanning segment. Residue tyrosine 195 is a topological domain, periplasmic.

The protein belongs to the Rht family.

Its subcellular location is the cell inner membrane. The catalysed reaction is O-acetyl-L-serine(in) = O-acetyl-L-serine(out). It catalyses the reaction L-cysteine(in) = L-cysteine(out). Exporter of O-acetylserine (OAS) and cysteine. This is Cysteine/O-acetylserine efflux protein (eamB) from Escherichia coli O139:H28 (strain E24377A / ETEC).